A 332-amino-acid chain; its full sequence is MSETNVQGSLAEAPKAAVKRVEQGVKLRGYDKVSRNPVKIIATDAVPRKPDWIRVRLSSSPSVEAIKQKLRKLNLHSVCEEASCPNLSECFSHGTATFMIMGDICTRRCPFCDVAHGRPNALDENEPTHLAQAIAEMNLKYVVITSVDRDDLRDGGAGHFAKCISESRKYSPNLKIEVLVPDFRGRMDVALDILRESPPDVFNHNLETVPRLYKQARPGADYAWSLLLLKRFKEAAPDVPTKSGLMLGIGEEIEEVKQVMRDLRAHNTDMLTLGQYLAPSKDHLPVVRFVHPDEFKELADYGYEIGFKQVASGPLVRSSYHADKQAAGETIS.

Positions 79, 84, 90, 105, 109, 112, and 319 each coordinate [4Fe-4S] cluster. One can recognise a Radical SAM core domain in the interval 91–308; it reads FSHGTATFMI…ADYGYEIGFK (218 aa).

The protein belongs to the radical SAM superfamily. Lipoyl synthase family. It depends on [4Fe-4S] cluster as a cofactor.

Its subcellular location is the cytoplasm. The catalysed reaction is [[Fe-S] cluster scaffold protein carrying a second [4Fe-4S](2+) cluster] + N(6)-octanoyl-L-lysyl-[protein] + 2 oxidized [2Fe-2S]-[ferredoxin] + 2 S-adenosyl-L-methionine + 4 H(+) = [[Fe-S] cluster scaffold protein] + N(6)-[(R)-dihydrolipoyl]-L-lysyl-[protein] + 4 Fe(3+) + 2 hydrogen sulfide + 2 5'-deoxyadenosine + 2 L-methionine + 2 reduced [2Fe-2S]-[ferredoxin]. The protein operates within protein modification; protein lipoylation via endogenous pathway; protein N(6)-(lipoyl)lysine from octanoyl-[acyl-carrier-protein]: step 2/2. Its function is as follows. Catalyzes the radical-mediated insertion of two sulfur atoms into the C-6 and C-8 positions of the octanoyl moiety bound to the lipoyl domains of lipoate-dependent enzymes, thereby converting the octanoylated domains into lipoylated derivatives. The polypeptide is Lipoyl synthase (Hahella chejuensis (strain KCTC 2396)).